The chain runs to 277 residues: MFVVHSMRLFTGASFRRNLMTSRRLSRKSCLSDSSTLEYSFSLYNKYCVTKKLKIKTICSFIYYYLTITISTIKNSTMSAKHLRPNITHIPVKRSYANILYFGRSAQLLETDRNAGWTKAHETACNGNLEDYEEEYKEMDKHEIDVRDGFGQTPMWIATTRCNYRNYVFLKKHGSDLHQKDYQGRSLLHATANAVNSECLDIFKDLIANGVDLYQKDMVGSTAIDELKHENSIINYETEGTLLVTNFFIFLYKFTYKFIKKLLTICYCIFSIHFFSL.

2 ANK repeats span residues 150-179 (FGQTPMWIATTRCNYRNYVFLKKHGSDLHQ) and 183-215 (QGRSLLHATANAVNSECLDIFKDLIANGVDLYQ).

This Acanthamoeba polyphaga (Amoeba) protein is Putative ankyrin repeat protein L81.